A 441-amino-acid polypeptide reads, in one-letter code: Cobyrinate a,c-diamide synthase (441 aa).

The region spanning 243-434 (TVAVADDAAF…AHVHPESTAF (192 aa)) is the GATase cobBQ-type domain. The active-site Nucleophile is the cysteine 323.

This sequence belongs to the CobB/CbiA family. Mg(2+) is required as a cofactor.

It carries out the reaction cob(II)yrinate + 2 L-glutamine + 2 ATP + 2 H2O = cob(II)yrinate a,c diamide + 2 L-glutamate + 2 ADP + 2 phosphate + 2 H(+). Its pathway is cofactor biosynthesis; adenosylcobalamin biosynthesis; cob(II)yrinate a,c-diamide from sirohydrochlorin (anaerobic route): step 10/10. Its function is as follows. Catalyzes the ATP-dependent amidation of the two carboxylate groups at positions a and c of cobyrinate, using either L-glutamine or ammonia as the nitrogen source. The sequence is that of Cobyrinate a,c-diamide synthase from Halobacterium salinarum (strain ATCC 700922 / JCM 11081 / NRC-1) (Halobacterium halobium).